Here is a 644-residue protein sequence, read N- to C-terminus: Sentrin-specific protease 1 (644 aa).

The segment at 1 to 200 (MDDIADRMRM…REIYRQLLQM (200 aa)) is interaction with CCAR2. Residues Ser57, Ser117, Ser132, and Ser157 each carry the phosphoserine modification. Residues 92-117 (QSANGQWRNSTPSSSSSLQKSRNSRS) form a disordered region. Low complexity predominate over residues 99 to 117 (RNSTPSSSSSLQKSRNSRS). 2 disordered regions span residues 156–184 (PSPS…TAEE) and 283–312 (SKDS…NTQS). The Nuclear localization signal signature appears at 171-177 (PKKTQRR). The interval 450-613 (LTITRKDIQT…GMFACKYADC (164 aa)) is protease. Catalysis depends on residues His533 and Asp550. Positions 574–577 (KKRK) match the Nuclear localization signal motif. Cys603 (nucleophile) is an active-site residue. A Nuclear localization signal motif is present at residues 628–634 (PYFRKRM). The short motif at 635–644 (VWEILHRKLL) is the Nuclear export signal element.

This sequence belongs to the peptidase C48 family. As to quaternary structure, interacts with RBM33; promoting ALKBH5 desumoylation and subsequent activation. Highly expressed in testis. Expressed at lower levels in thymus, pancreas, spleen, liver, ovary and small intestine.

It localises to the nucleus. The protein localises to the cytoplasm. Protease that catalyzes two essential functions in the SUMO pathway. The first is the hydrolysis of an alpha-linked peptide bond at the C-terminal end of the small ubiquitin-like modifier (SUMO) propeptides, SUMO1, SUMO2 and SUMO3 leading to the mature form of the proteins. The second is the deconjugation of SUMO1, SUMO2 and SUMO3 from targeted proteins, by cleaving an epsilon-linked peptide bond between the C-terminal glycine of the mature SUMO and the lysine epsilon-amino group of the target protein. Deconjugates SUMO1 from HIPK2. Deconjugates SUMO1 from HDAC1 and BHLHE40/DEC1, which decreases its transcriptional repression activity. Deconjugates SUMO1 from CLOCK, which decreases its transcriptional activation activity. Deconjugates SUMO2 from MTA1. Inhibits N(6)-methyladenosine (m6A) RNA methylation by mediating SUMO1 deconjugation from METTL3 and ALKBH5: METTL3 inhibits the m6A RNA methyltransferase activity, while ALKBH5 desumoylation promotes m6A demethylation. Desumoylates CCAR2 which decreases its interaction with SIRT1. Deconjugates SUMO1 from GPS2. This Homo sapiens (Human) protein is Sentrin-specific protease 1 (SENP1).